Reading from the N-terminus, the 390-residue chain is Magnesium-protoporphyrin IX monomethyl ester [oxidative] cyclase (390 aa).

This sequence belongs to the AcsF family. Fe cation is required as a cofactor.

The catalysed reaction is Mg-protoporphyrin IX 13-monomethyl ester + 3 NADPH + 3 O2 + 2 H(+) = 3,8-divinyl protochlorophyllide a + 3 NADP(+) + 5 H2O. Its pathway is porphyrin-containing compound metabolism; chlorophyll biosynthesis (light-independent). In terms of biological role, catalyzes the formation of the isocyclic ring in chlorophyll biosynthesis. Mediates the cyclase reaction, which results in the formation of divinylprotochlorophyllide (Pchlide) characteristic of all chlorophylls from magnesium-protoporphyrin IX 13-monomethyl ester (MgPMME). The protein is Magnesium-protoporphyrin IX monomethyl ester [oxidative] cyclase of Prochlorococcus marinus subsp. pastoris (strain CCMP1986 / NIES-2087 / MED4).